A 390-amino-acid polypeptide reads, in one-letter code: Alkanesulfonate monooxygenase 1 (390 aa).

The interval 364–390 (TGSSVNTGPFGETIAGDHRPKSLASAS) is disordered.

The protein belongs to the SsuD family.

The enzyme catalyses an alkanesulfonate + FMNH2 + O2 = an aldehyde + FMN + sulfite + H2O + 2 H(+). In terms of biological role, catalyzes the desulfonation of aliphatic sulfonates. The sequence is that of Alkanesulfonate monooxygenase 1 (ssuD1) from Mesorhizobium japonicum (strain LMG 29417 / CECT 9101 / MAFF 303099) (Mesorhizobium loti (strain MAFF 303099)).